Reading from the N-terminus, the 851-residue chain is DNA mismatch repair protein MutS (851 aa).

614 to 621 (GPNMGGKS) is an ATP binding site.

The protein belongs to the DNA mismatch repair MutS family.

In terms of biological role, this protein is involved in the repair of mismatches in DNA. It is possible that it carries out the mismatch recognition step. This protein has a weak ATPase activity. The polypeptide is DNA mismatch repair protein MutS (Yersinia pestis).